A 159-amino-acid polypeptide reads, in one-letter code: Nucleotide-binding protein PSPTO_4393 (159 aa).

Belongs to the YajQ family.

Functionally, nucleotide-binding protein. The chain is Nucleotide-binding protein PSPTO_4393 from Pseudomonas syringae pv. tomato (strain ATCC BAA-871 / DC3000).